A 179-amino-acid polypeptide reads, in one-letter code: Bifunctional protein PyrR (179 aa).

A PRPP-binding motif is present at residues 100–112 (VILIDDVLFTGRT).

This sequence belongs to the purine/pyrimidine phosphoribosyltransferase family. PyrR subfamily.

The catalysed reaction is UMP + diphosphate = 5-phospho-alpha-D-ribose 1-diphosphate + uracil. Its function is as follows. Regulates the transcription of the pyrimidine nucleotide (pyr) operon in response to exogenous pyrimidines. Functionally, also displays a weak uracil phosphoribosyltransferase activity which is not physiologically significant. The protein is Bifunctional protein PyrR of Mannheimia succiniciproducens (strain KCTC 0769BP / MBEL55E).